A 186-amino-acid chain; its full sequence is RNA polymerase sigma factor NccH (186 aa).

The Polymerase core binding motif lies at 49–62 (DIVQDTFIAAWHAL). Positions 152 to 171 (HPEAAMALGTSAKAVESRVA) form a DNA-binding region, H-T-H motif.

Belongs to the sigma-70 factor family. ECF subfamily.

Sigma factors are initiation factors that promote the attachment of RNA polymerase to specific initiation sites and are then released. This sigma factor regulates the genes for a membrane-located efflux system that confers resistance to nickel, cobalt and cadmium. This chain is RNA polymerase sigma factor NccH (nccH), found in Alcaligenes xylosoxydans xylosoxydans (Achromobacter xylosoxidans).